A 236-amino-acid polypeptide reads, in one-letter code: Biosynthetic peptidoglycan transglycosylase (236 aa).

The helical transmembrane segment at 12–31 (ALLWFAAGSALVVLVLRWVP) threads the bilayer.

It belongs to the glycosyltransferase 51 family.

Its subcellular location is the cell inner membrane. The catalysed reaction is [GlcNAc-(1-&gt;4)-Mur2Ac(oyl-L-Ala-gamma-D-Glu-L-Lys-D-Ala-D-Ala)](n)-di-trans,octa-cis-undecaprenyl diphosphate + beta-D-GlcNAc-(1-&gt;4)-Mur2Ac(oyl-L-Ala-gamma-D-Glu-L-Lys-D-Ala-D-Ala)-di-trans,octa-cis-undecaprenyl diphosphate = [GlcNAc-(1-&gt;4)-Mur2Ac(oyl-L-Ala-gamma-D-Glu-L-Lys-D-Ala-D-Ala)](n+1)-di-trans,octa-cis-undecaprenyl diphosphate + di-trans,octa-cis-undecaprenyl diphosphate + H(+). It functions in the pathway cell wall biogenesis; peptidoglycan biosynthesis. Functionally, peptidoglycan polymerase that catalyzes glycan chain elongation from lipid-linked precursors. This is Biosynthetic peptidoglycan transglycosylase from Pseudomonas syringae pv. tomato (strain ATCC BAA-871 / DC3000).